Consider the following 53-residue polypeptide: Large ribosomal subunit protein bL32c (53 aa).

It belongs to the bacterial ribosomal protein bL32 family.

Its subcellular location is the plastid. The protein localises to the chloroplast. This Guillardia theta (Cryptophyte) protein is Large ribosomal subunit protein bL32c (rpl32).